A 219-amino-acid chain; its full sequence is Elongation factor Ts (219 aa).

Positions 82 to 85 are involved in Mg(2+) ion dislocation from EF-Tu; the sequence is TDFV.

The protein belongs to the EF-Ts family.

It is found in the cytoplasm. Its function is as follows. Associates with the EF-Tu.GDP complex and induces the exchange of GDP to GTP. It remains bound to the aminoacyl-tRNA.EF-Tu.GTP complex up to the GTP hydrolysis stage on the ribosome. The protein is Elongation factor Ts of Anaeromyxobacter dehalogenans (strain 2CP-1 / ATCC BAA-258).